The chain runs to 157 residues: Protein Smg homolog (157 aa).

Belongs to the Smg family.

The sequence is that of Protein Smg homolog from Aeromonas hydrophila subsp. hydrophila (strain ATCC 7966 / DSM 30187 / BCRC 13018 / CCUG 14551 / JCM 1027 / KCTC 2358 / NCIMB 9240 / NCTC 8049).